We begin with the raw amino-acid sequence, 265 residues long: Apolipoprotein A-I (265 aa).

A signal peptide spans 1-18 (MKAVVLTLAVLFLTGSQA). 2 repeat units span residues 67–88 (LKLL…EQLG) and 89–110 (PVTQ…QEMS). The interval 67–265 (LKLLDNWDSL…DEASKKLNAQ (199 aa)) is 10 X approximate tandem repeats. The residue at position 109 (M109) is a Methionine sulfoxide. One copy of the 3; half-length repeat lies at 111–121 (KDLEEVKKKVQ). A run of 5 repeats spans residues 122-142 (PYLD…RQKM), 144-165 (PLGA…EKLS), 166-187 (PLAE…QHVA), 188-209 (PYSD…EGGG), and 210-230 (SLAE…EKAK). A Methionine sulfoxide modification is found at M135. The stretch at 231–241 (PALEDLRQGLL) is one 9; half-length repeat. Residues 242–265 (PVLENLKVSILAAIDEASKKLNAQ) form repeat 10.

This sequence belongs to the apolipoprotein A1/A4/E family. As to quaternary structure, homodimer. Interacts with APOA1BP and CLU. Component of a sperm activating protein complex (SPAP), consisting of APOA1, an immunoglobulin heavy chain, an immunoglobulin light chain and albumin. Interacts with NDRG1. Interacts with SCGB3A2. Interacts with NAXE and YJEFN3. In terms of processing, glycosylated. Post-translationally, palmitoylated. Phosphorylation sites are present in the extracellular medium. In terms of tissue distribution, major protein of plasma HDL, also found in chylomicrons. Synthesized predominantly in the intestine and the liver.

It is found in the secreted. Participates in the reverse transport of cholesterol from tissues to the liver for excretion by promoting cholesterol efflux from tissues and by acting as a cofactor for the lecithin cholesterol acyltransferase (LCAT). As part of the SPAP complex, activates spermatozoa motility. The chain is Apolipoprotein A-I (APOA1) from Sus scrofa (Pig).